We begin with the raw amino-acid sequence, 482 residues long: 7-deoxyloganetic acid glucosyltransferase (482 aa).

The Proton acceptor role is filled by His22. An anthocyanidin is bound at residue His22. The active-site Charge relay is the Asp127. Residues Thr149, Ala362, Gln364, His379, Trp382, Asn383, Ser384, and Glu387 each contribute to the UDP-alpha-D-glucose site. An an anthocyanidin-binding site is contributed by Ala402. Positions 403 and 404 each coordinate UDP-alpha-D-glucose.

This sequence belongs to the UDP-glycosyltransferase family. As to expression, expressed in leaves, roots and stems. Lower levels of expression in flowers. Preferentially expressed in internal phloem parenchyma cells.

It catalyses the reaction 7-deoxyloganetate + UDP-alpha-D-glucose = 7-deoxyloganate + UDP + H(+). Its function is as follows. Iridoid glucosyltransferase acting exclusively on 7-deoxyloganetic acid. No activity with 7-deoxyloganetin. Catalyzes the fourth to last step in secologanin biosynthesis. The sequence is that of 7-deoxyloganetic acid glucosyltransferase (UGT709C2) from Catharanthus roseus (Madagascar periwinkle).